Here is a 72-residue protein sequence, read N- to C-terminus: Defensin 3 (72 aa).

The signal sequence occupies residues 1-25; that stretch reads MEKKMAGFCIFFLVLFLAQEYGVEG. 3 disulfide bridges follow: Cys28–Cys72, Cys39–Cys60, and Cys45–Cys66.

This sequence belongs to the DEFL family. May form dimers. In terms of processing, not glycosylated. Post-translationally, has 4 disulfide bonds.

In terms of biological role, probably has antifungal activity. The polypeptide is Defensin 3 (Arachis hypogaea (Peanut)).